Consider the following 103-residue polypeptide: Pyrimidine/purine nucleoside phosphorylase (103 aa).

It belongs to the nucleoside phosphorylase PpnP family.

It carries out the reaction a purine D-ribonucleoside + phosphate = a purine nucleobase + alpha-D-ribose 1-phosphate. It catalyses the reaction adenosine + phosphate = alpha-D-ribose 1-phosphate + adenine. The catalysed reaction is cytidine + phosphate = cytosine + alpha-D-ribose 1-phosphate. The enzyme catalyses guanosine + phosphate = alpha-D-ribose 1-phosphate + guanine. It carries out the reaction inosine + phosphate = alpha-D-ribose 1-phosphate + hypoxanthine. It catalyses the reaction thymidine + phosphate = 2-deoxy-alpha-D-ribose 1-phosphate + thymine. The catalysed reaction is uridine + phosphate = alpha-D-ribose 1-phosphate + uracil. The enzyme catalyses xanthosine + phosphate = alpha-D-ribose 1-phosphate + xanthine. Functionally, catalyzes the phosphorolysis of diverse nucleosides, yielding D-ribose 1-phosphate and the respective free bases. Can use uridine, adenosine, guanosine, cytidine, thymidine, inosine and xanthosine as substrates. Also catalyzes the reverse reactions. The sequence is that of Pyrimidine/purine nucleoside phosphorylase from Shewanella baltica (strain OS223).